The chain runs to 444 residues: NADH-quinone oxidoreductase subunit F (444 aa).

62–71 (GRGGAGFLTG) lines the NAD(+) pocket. Position 177-224 (177-224 (GAGRYICGEETALINSLEGRRANPRFKPPFPAYVGLWGKPTCVNNVET)) interacts with FMN. 4 residues coordinate [4Fe-4S] cluster: Cys354, Cys357, Cys360, and Cys401.

The protein belongs to the complex I 51 kDa subunit family. Composed of 13 different subunits. Subunits NuoCD, E, F, and G constitute the peripheral sector of the complex. [4Fe-4S] cluster serves as cofactor. FMN is required as a cofactor.

It catalyses the reaction a quinone + NADH + 5 H(+)(in) = a quinol + NAD(+) + 4 H(+)(out). NDH-1 shuttles electrons from NADH, via FMN and iron-sulfur (Fe-S) centers, to quinones in the respiratory chain. Couples the redox reaction to proton translocation (for every two electrons transferred, four hydrogen ions are translocated across the cytoplasmic membrane), and thus conserves the redox energy in a proton gradient. The sequence is that of NADH-quinone oxidoreductase subunit F (nuoF) from Buchnera aphidicola subsp. Baizongia pistaciae (strain Bp).